Consider the following 405-residue polypeptide: Putative polysaccharide ligase RP358 (405 aa).

The next 10 membrane-spanning stretches (helical) occupy residues 23-43 (IAATVAFFLLSIIITGFISFI), 77-97 (LFTAWCFISCLFAVHPINSLV), 120-140 (VLYIKNSLILGIITAILLFFI), 156-178 (FGLYMLDRGCALLSITTWVAIII), 201-221 (ISDSLASFLGFSIGGIIFILA), 227-247 (IFFKLITISLITGSLLFPVIA), 270-290 (LFIWHFVANKIIIRPILGYGF), 322-342 (ILQITLELGILGLALFLCLVY), 353-375 (VSNFRAASYSCFINYYIIGMISY), and 377-397 (IWQTWWILSGIWILVLMKLLV).

This sequence belongs to the O-antigen ligase family.

The protein resides in the membrane. The polypeptide is Putative polysaccharide ligase RP358 (Rickettsia prowazekii (strain Madrid E)).